The primary structure comprises 107 residues: U1-lycotoxin-Ls1b (107 aa).

The first 20 residues, Met1–Gly20, serve as a signal peptide directing secretion. Positions Glu21 to Arg41 are excised as a propeptide. Cystine bridges form between Cys44-Cys59, Cys51-Cys68, Cys58-Cys86, and Cys70-Cys84.

Belongs to the neurotoxin 19 (CSTX) family. 04 (U1-Lctx) subfamily. In terms of tissue distribution, expressed by the venom gland.

It is found in the secreted. In Lycosa singoriensis (Wolf spider), this protein is U1-lycotoxin-Ls1b.